The sequence spans 228 residues: 2-C-methyl-D-erythritol 4-phosphate cytidylyltransferase (228 aa).

Belongs to the IspD/TarI cytidylyltransferase family. IspD subfamily.

The enzyme catalyses 2-C-methyl-D-erythritol 4-phosphate + CTP + H(+) = 4-CDP-2-C-methyl-D-erythritol + diphosphate. The protein operates within isoprenoid biosynthesis; isopentenyl diphosphate biosynthesis via DXP pathway; isopentenyl diphosphate from 1-deoxy-D-xylulose 5-phosphate: step 2/6. Functionally, catalyzes the formation of 4-diphosphocytidyl-2-C-methyl-D-erythritol from CTP and 2-C-methyl-D-erythritol 4-phosphate (MEP). In Mannheimia succiniciproducens (strain KCTC 0769BP / MBEL55E), this protein is 2-C-methyl-D-erythritol 4-phosphate cytidylyltransferase.